A 420-amino-acid chain; its full sequence is Serine hydroxymethyltransferase (420 aa).

(6S)-5,6,7,8-tetrahydrofolate contacts are provided by residues leucine 121 and 125–127 (GHL). Lysine 230 carries the N6-(pyridoxal phosphate)lysine modification. Position 355–357 (355–357 (SPF)) interacts with (6S)-5,6,7,8-tetrahydrofolate.

Belongs to the SHMT family. As to quaternary structure, homodimer. Pyridoxal 5'-phosphate is required as a cofactor.

The protein resides in the cytoplasm. The enzyme catalyses (6R)-5,10-methylene-5,6,7,8-tetrahydrofolate + glycine + H2O = (6S)-5,6,7,8-tetrahydrofolate + L-serine. It functions in the pathway one-carbon metabolism; tetrahydrofolate interconversion. The protein operates within amino-acid biosynthesis; glycine biosynthesis; glycine from L-serine: step 1/1. Catalyzes the reversible interconversion of serine and glycine with tetrahydrofolate (THF) serving as the one-carbon carrier. This reaction serves as the major source of one-carbon groups required for the biosynthesis of purines, thymidylate, methionine, and other important biomolecules. Also exhibits THF-independent aldolase activity toward beta-hydroxyamino acids, producing glycine and aldehydes, via a retro-aldol mechanism. This is Serine hydroxymethyltransferase from Streptococcus gordonii (strain Challis / ATCC 35105 / BCRC 15272 / CH1 / DL1 / V288).